A 318-amino-acid chain; its full sequence is Retinol dehydrogenase 11 (318 aa).

A helical; Signal-anchor for type II membrane protein membrane pass occupies residues Met1–Ala21. At Pro22–Asp318 the chain is on the cytoplasmic side. Gly48–Gly54 contributes to the NADP(+) binding site. N6-acetyllysine is present on Lys112. Substrate is bound at residue Ser177. Tyr202 (proton acceptor) is an active-site residue.

It belongs to the short-chain dehydrogenases/reductases (SDR) family. Interacts with SELENOF. Not glycosylated. Predominantly expressed in the epithelial cells of prostate, in both basal and luminal secretory cell populations. Expressed at low levels in spleen, thymus, testis, ovary, small intestine, colon, peripherical blood leukocytes, kidney, adrenal gland and fetal liver. Not detected in prostatic fibromuscular stromal cells, endothelial cells, or infiltrating lymphocytes.

The protein localises to the endoplasmic reticulum membrane. It carries out the reaction all-trans-retinol + NADP(+) = all-trans-retinal + NADPH + H(+). The enzyme catalyses 11-cis-retinol + NADP(+) = 11-cis-retinal + NADPH + H(+). The catalysed reaction is 9-cis-retinol + NADP(+) = 9-cis-retinal + NADPH + H(+). It catalyses the reaction 13-cis-retinol + NADP(+) = 13-cis-retinal + NADPH + H(+). It functions in the pathway cofactor metabolism; retinol metabolism. SELENOF decreases the retinol dehydrogenase activity. Functionally, retinol dehydrogenase with a clear preference for NADP. Displays high activity towards 9-cis, 11-cis and all-trans-retinol, and to a lesser extent on 13-cis-retinol. Exhibits a low reductive activity towards unsaturated medium-chain aldehydes such as cis -6-nonenal and no activity toward nonanal or 4-hydroxy-nonenal. Has no dehydrogenase activity towards steroid. The sequence is that of Retinol dehydrogenase 11 (RDH11) from Homo sapiens (Human).